The primary structure comprises 178 residues: Large ribosomal subunit protein uL5 (178 aa).

Ala2 bears the N-acetylalanine mark. Lys38 participates in a covalent cross-link: Glycyl lysine isopeptide (Lys-Gly) (interchain with G-Cter in SUMO2). Residues Thr44 and Thr47 each carry the phosphothreonine modification. Lys52 bears the N6-acetyllysine; alternate mark. A Glycyl lysine isopeptide (Lys-Gly) (interchain with G-Cter in SUMO2); alternate cross-link involves residue Lys52. Lys85 is modified (N6-acetyllysine). A Glycyl lysine isopeptide (Lys-Gly) (interchain with G-Cter in SUMO2) cross-link involves residue Lys154.

The protein belongs to the universal ribosomal protein uL5 family. In terms of assembly, component of the large ribosomal subunit (LSU). Part of the 5S RNP complex, which is a LSU subcomplex composed of the 5S RNA, RPL5 and RPL11. Component of a hexameric 5S RNP precursor complex, composed of 5S RNA, RRS1, RPF2/BXDC1, RPL5, RPL11 and HEATR3; this complex acts as a precursor for ribosome assembly. Interacts with PML. Interacts with MDM2 (via its RanBP2-type zinc finger domain); negatively regulates MDM2-mediated TP53 ubiquitination and degradation. Interacts with NOP53; retains RPL11 into the nucleolus.

Its subcellular location is the nucleus. The protein localises to the nucleolus. It is found in the cytoplasm. Functionally, component of the ribosome, a large ribonucleoprotein complex responsible for the synthesis of proteins in the cell. The small ribosomal subunit (SSU) binds messenger RNAs (mRNAs) and translates the encoded message by selecting cognate aminoacyl-transfer RNA (tRNA) molecules. The large subunit (LSU) contains the ribosomal catalytic site termed the peptidyl transferase center (PTC), which catalyzes the formation of peptide bonds, thereby polymerizing the amino acids delivered by tRNAs into a polypeptide chain. The nascent polypeptides leave the ribosome through a tunnel in the LSU and interact with protein factors that function in enzymatic processing, targeting, and the membrane insertion of nascent chains at the exit of the ribosomal tunnel. As part of the 5S RNP/5S ribonucleoprotein particle it is an essential component of the LSU, required for its formation and the maturation of rRNAs. It also couples ribosome biogenesis to p53/TP53 activation. As part of the 5S RNP it accumulates in the nucleoplasm and inhibits MDM2, when ribosome biogenesis is perturbed, mediating the stabilization and the activation of TP53. Promotes nucleolar location of PML. This is Large ribosomal subunit protein uL5 (RPL11) from Pongo abelii (Sumatran orangutan).